Here is a 242-residue protein sequence, read N- to C-terminus: Uridylate kinase (242 aa).

An ATP-binding site is contributed by 11–14 (KLSG). Gly-53 provides a ligand contact to UMP. 2 residues coordinate ATP: Gly-54 and Arg-58. Residues Asp-73 and 134–141 (SGNPFFTT) contribute to the UMP site. Residues Thr-161, Tyr-167, and Asp-170 each contribute to the ATP site.

This sequence belongs to the UMP kinase family. Homohexamer.

The protein resides in the cytoplasm. It catalyses the reaction UMP + ATP = UDP + ADP. The protein operates within pyrimidine metabolism; CTP biosynthesis via de novo pathway; UDP from UMP (UMPK route): step 1/1. Its activity is regulated as follows. Inhibited by UTP. Its function is as follows. Catalyzes the reversible phosphorylation of UMP to UDP. In Thermosynechococcus vestitus (strain NIES-2133 / IAM M-273 / BP-1), this protein is Uridylate kinase.